The following is a 393-amino-acid chain: Sulfite oxidase (393 aa).

Positions 1-27 (MPGIRGPSEYSQEPPRHPSLKVNAKEP) are disordered. The moco domain stretch occupies residues 10–242 (YSQEPPRHPS…QGFFMQKDYK (233 aa)). Residues 49–53 (YKRNH), Cys98, 159–161 (SVD), His202, Arg207, and 218–220 (SVK) contribute to the Mo-molybdopterin site. Residues 243-393 (MFPPSVNWDN…VLLRLGHSNL (151 aa)) are homodimerization. A Microbody targeting signal motif is present at residues 391-393 (SNL).

Predominantly monomer; also homodimer. Requires Mo-molybdopterin as cofactor.

Its subcellular location is the peroxisome. It catalyses the reaction sulfite + O2 + H2O = sulfate + H2O2. It participates in energy metabolism; sulfur metabolism. Its function is as follows. Probably involved in sulfite oxidative detoxification. In Arabidopsis thaliana (Mouse-ear cress), this protein is Sulfite oxidase (SOX).